Consider the following 251-residue polypeptide: 3-deoxy-manno-octulosonate cytidylyltransferase (251 aa).

Belongs to the KdsB family.

The protein resides in the cytoplasm. The catalysed reaction is 3-deoxy-alpha-D-manno-oct-2-ulosonate + CTP = CMP-3-deoxy-beta-D-manno-octulosonate + diphosphate. Its pathway is nucleotide-sugar biosynthesis; CMP-3-deoxy-D-manno-octulosonate biosynthesis; CMP-3-deoxy-D-manno-octulosonate from 3-deoxy-D-manno-octulosonate and CTP: step 1/1. The protein operates within bacterial outer membrane biogenesis; lipopolysaccharide biosynthesis. Activates KDO (a required 8-carbon sugar) for incorporation into bacterial lipopolysaccharide in Gram-negative bacteria. This chain is 3-deoxy-manno-octulosonate cytidylyltransferase, found in Vibrio parahaemolyticus serotype O3:K6 (strain RIMD 2210633).